Reading from the N-terminus, the 288-residue chain is Type II restriction enzyme DpnII (288 aa).

The protein belongs to the DpnII type II restriction endonuclease family. In terms of assembly, homodimer.

The enzyme catalyses Endonucleolytic cleavage of DNA to give specific double-stranded fragments with terminal 5'-phosphates.. A P subtype restriction enzyme that recognizes the double-stranded unmethylated sequence 5'-GATC-3' and cleaves before G-1. This is Type II restriction enzyme DpnII from Streptococcus pneumoniae.